A 181-amino-acid polypeptide reads, in one-letter code: Protein GrpE (181 aa).

The span at 1–13 (MENTQENPATQSA) shows a compositional bias: polar residues. A disordered region spans residues 1–34 (MENTQENPATQSAEDIGSAKQAAQGAAPAAEAAD). A compositionally biased stretch (low complexity) spans 19–34 (AKQAAQGAAPAAEAAD).

This sequence belongs to the GrpE family. As to quaternary structure, homodimer.

The protein resides in the cytoplasm. Its function is as follows. Participates actively in the response to hyperosmotic and heat shock by preventing the aggregation of stress-denatured proteins, in association with DnaK and GrpE. It is the nucleotide exchange factor for DnaK and may function as a thermosensor. Unfolded proteins bind initially to DnaJ; upon interaction with the DnaJ-bound protein, DnaK hydrolyzes its bound ATP, resulting in the formation of a stable complex. GrpE releases ADP from DnaK; ATP binding to DnaK triggers the release of the substrate protein, thus completing the reaction cycle. Several rounds of ATP-dependent interactions between DnaJ, DnaK and GrpE are required for fully efficient folding. In Burkholderia vietnamiensis (strain G4 / LMG 22486) (Burkholderia cepacia (strain R1808)), this protein is Protein GrpE.